The sequence spans 404 residues: G1/S-specific cyclin-E2 (404 aa).

The segment at 1–44 is disordered; that stretch reads MSRRSSRLQAKQQPQPSQTESPQEAQIIQAKKRKTTQDVKKRRE. Over residues 12 to 26 the composition is skewed to low complexity; the sequence is QQPQPSQTESPQEAQ. Ser-21 carries the phosphoserine modification. The segment covering 35–44 has biased composition (basic and acidic residues); the sequence is TTQDVKKRRE. Lys-348 is subject to N6-lactoyllysine. Ser-383 is modified (phosphoserine). Thr-392 carries the post-translational modification Phosphothreonine.

Belongs to the cyclin family. Cyclin E subfamily. As to quaternary structure, interacts with the CDK2 (in vivo) and CDK3 (in vitro) protein kinases to form a serine/threonine kinase holoenzyme complex. The cyclin subunit imparts substrate specificity to the complex. Phosphorylation by CDK2 triggers its release from CDK2 and degradation via the ubiquitin proteasome pathway. In terms of processing, lactylated at Lys-348. Delactylated by SIRT3. According to PubMed:9858585, highest levels of expression in adult testis, thymus and brain. Lower levels in placenta, spleen and colon. Consistently elevated levels in tumor-derived cells compared to non-transformed proliferating cells. According to PubMed:9840927: low levels in thymus, prostate, brain, skeletal muscle, and kidney. Elevated levels in lung. According to PubMed:9840943 highly expressed in testis, placenta, thymus and brain. In a lesser extent in small intestine and colon.

Its subcellular location is the nucleus. Essential for the control of the cell cycle at the late G1 and early S phase. The polypeptide is G1/S-specific cyclin-E2 (CCNE2) (Homo sapiens (Human)).